The sequence spans 465 residues: Chromosomal replication initiator protein DnaA (465 aa).

The tract at residues 1–84 (MSLSLWQQCL…RFEVGSKPLV (84 aa)) is domain I, interacts with DnaA modulators. Positions 84–128 (VQTISQPAQSHHNPVSVARQQPVRMAPVRPSWDNSPVQAEHTYRS) are domain II. The interval 129-345 (NVNPKHTFDN…GALNRVIANA (217 aa)) is domain III, AAA+ region. Gly-173, Gly-175, Lys-176, and Thr-177 together coordinate ATP. The segment at 346–465 (NFTGRSITID…FSNLIRTLSS (120 aa)) is domain IV, binds dsDNA.

Belongs to the DnaA family. As to quaternary structure, oligomerizes as a right-handed, spiral filament on DNA at oriC.

It localises to the cytoplasm. Plays an essential role in the initiation and regulation of chromosomal replication. ATP-DnaA binds to the origin of replication (oriC) to initiate formation of the DNA replication initiation complex once per cell cycle. Binds the DnaA box (a 9 base pair repeat at the origin) and separates the double-stranded (ds)DNA. Forms a right-handed helical filament on oriC DNA; dsDNA binds to the exterior of the filament while single-stranded (ss)DNA is stabiized in the filament's interior. The ATP-DnaA-oriC complex binds and stabilizes one strand of the AT-rich DNA unwinding element (DUE), permitting loading of DNA polymerase. After initiation quickly degrades to an ADP-DnaA complex that is not apt for DNA replication. Binds acidic phospholipids. This chain is Chromosomal replication initiator protein DnaA, found in Pectobacterium atrosepticum (strain SCRI 1043 / ATCC BAA-672) (Erwinia carotovora subsp. atroseptica).